A 345-amino-acid polypeptide reads, in one-letter code: Dihydroorotate dehydrogenase (quinone) (345 aa).

Residues 65–69 and threonine 89 contribute to the FMN site; that span reads AGLDK. Lysine 69 is a binding site for substrate. 114–118 is a binding site for substrate; it reads NRMGF. Residues asparagine 142 and asparagine 175 each coordinate FMN. A substrate-binding site is contributed by asparagine 175. Catalysis depends on serine 178, which acts as the Nucleophile. Asparagine 180 contributes to the substrate binding site. Positions 220 and 248 each coordinate FMN. 249 to 250 is a substrate binding site; sequence NT. FMN contacts are provided by residues glycine 271, glycine 300, and 321–322; that span reads YT.

The protein belongs to the dihydroorotate dehydrogenase family. Type 2 subfamily. As to quaternary structure, monomer. Requires FMN as cofactor.

The protein localises to the cell membrane. The enzyme catalyses (S)-dihydroorotate + a quinone = orotate + a quinol. It functions in the pathway pyrimidine metabolism; UMP biosynthesis via de novo pathway; orotate from (S)-dihydroorotate (quinone route): step 1/1. Functionally, catalyzes the conversion of dihydroorotate to orotate with quinone as electron acceptor. This Burkholderia cenocepacia (strain ATCC BAA-245 / DSM 16553 / LMG 16656 / NCTC 13227 / J2315 / CF5610) (Burkholderia cepacia (strain J2315)) protein is Dihydroorotate dehydrogenase (quinone).